We begin with the raw amino-acid sequence, 446 residues long: GTPase Der (446 aa).

2 consecutive EngA-type G domains span residues 2-166 (TVVA…PEAP) and 179-354 (IRVS…RQYN). GTP-binding positions include 8-15 (GRPNVGKS), 55-59 (DTAGF), 118-121 (NKID), 185-192 (GRPNVGKS), 232-236 (DTAGI), and 297-300 (NKWD). In terms of domain architecture, KH-like spans 355 to 440 (QRVTTGIVNR…PIRLIFRPRQ (86 aa)).

Belongs to the TRAFAC class TrmE-Era-EngA-EngB-Septin-like GTPase superfamily. EngA (Der) GTPase family. Associates with the 50S ribosomal subunit.

Its function is as follows. GTPase that plays an essential role in the late steps of ribosome biogenesis. The sequence is that of GTPase Der from Syntrophobacter fumaroxidans (strain DSM 10017 / MPOB).